The chain runs to 453 residues: Dihydrolipoyllysine-residue succinyltransferase component of 2-oxoglutarate dehydrogenase complex, mitochondrial (453 aa).

A mitochondrion-targeting transit peptide spans Met1–Lys67. Residues Leu70–Arg144 enclose the Lipoyl-binding domain. Ser81 is modified (phosphoserine). An N6-lipoyllysine modification is found at Lys110. A compositionally biased stretch (low complexity) spans Lys152 to Ala172. The tract at residues Lys152–Glu225 is disordered. Lys154 bears the N6-acetyllysine mark. The span at Val173–Gly196 shows a compositional bias: pro residues. N6-acetyllysine occurs at positions 267, 272, 273, 277, and 307. Active-site residues include His424 and Asp428.

This sequence belongs to the 2-oxoacid dehydrogenase family. As to quaternary structure, the 2-oxoglutarate dehydrogenase complex is composed of OGDH (2-oxoglutarate dehydrogenase; E1), DLST (dihydrolipoamide succinyltransferase; E2), DLD (dihydrolipoamide dehydrogenase; E3) and the assembly factor KGD4. It contains multiple copies of the three enzymatic components (E1, E2 and E3). In the nucleus, the 2-oxoglutarate dehydrogenase complex associates with KAT2A. Interacts with ABHD11; this interaction maintains the functional lipoylation of the 2-oxoglutarate dehydrogenase complex. Requires (R)-lipoate as cofactor.

It localises to the mitochondrion matrix. The protein localises to the nucleus. The enzyme catalyses N(6)-[(R)-dihydrolipoyl]-L-lysyl-[protein] + succinyl-CoA = N(6)-[(R)-S(8)-succinyldihydrolipoyl]-L-lysyl-[protein] + CoA. It functions in the pathway amino-acid degradation; L-lysine degradation via saccharopine pathway; glutaryl-CoA from L-lysine: step 6/6. The protein operates within carbohydrate metabolism; tricarboxylic acid cycle. In terms of biological role, dihydrolipoamide succinyltransferase (E2) component of the 2-oxoglutarate dehydrogenase complex. The 2-oxoglutarate dehydrogenase complex catalyzes the overall conversion of 2-oxoglutarate to succinyl-CoA and CO(2). The 2-oxoglutarate dehydrogenase complex is mainly active in the mitochondrion. A fraction of the 2-oxoglutarate dehydrogenase complex also localizes in the nucleus and is required for lysine succinylation of histones: associates with KAT2A on chromatin and provides succinyl-CoA to histone succinyltransferase KAT2A. The sequence is that of Dihydrolipoyllysine-residue succinyltransferase component of 2-oxoglutarate dehydrogenase complex, mitochondrial from Homo sapiens (Human).